A 30-amino-acid polypeptide reads, in one-letter code: DSSESNEIDDVLFLGRRDANSFMKYPQLGN.

Ser-2, Ser-3, and Ser-5 each carry phosphoserine.

The protein belongs to the osteocalcin/matrix Gla protein family. Post-translationally, requires vitamin K-dependent gamma-carboxylation for its function.

It localises to the secreted. Associates with the organic matrix of calcified cartilage. The polypeptide is Matrix Gla protein (mgp) (Prionace glauca (Blue shark)).